The chain runs to 397 residues: Mannonate dehydratase (397 aa).

This sequence belongs to the mannonate dehydratase family. Fe(2+) serves as cofactor. It depends on Mn(2+) as a cofactor.

The enzyme catalyses D-mannonate = 2-dehydro-3-deoxy-D-gluconate + H2O. It functions in the pathway carbohydrate metabolism; pentose and glucuronate interconversion. Functionally, catalyzes the dehydration of D-mannonate. The chain is Mannonate dehydratase from Yersinia pestis bv. Antiqua (strain Antiqua).